The chain runs to 500 residues: Trehalose-6-phosphate synthase (500 aa).

Position 28 (R28) interacts with D-glucose 6-phosphate. 48 to 49 (GG) serves as a coordination point for UDP-alpha-D-glucose. Residues Y104 and D158 each coordinate D-glucose 6-phosphate. 2 residues coordinate UDP-alpha-D-glucose: R300 and K305. D-glucose 6-phosphate is bound at residue R338. A UDP-alpha-D-glucose-binding site is contributed by 403–407 (LVAKE).

It belongs to the glycosyltransferase 20 family. Homotetramer.

It carries out the reaction ADP-alpha-D-glucose + D-glucose 6-phosphate = alpha,alpha-trehalose 6-phosphate + ADP + H(+). It catalyses the reaction CDP-alpha-D-glucose + D-glucose 6-phosphate = alpha,alpha-trehalose 6-phosphate + CDP + H(+). The catalysed reaction is GDP-alpha-D-glucose + D-glucose 6-phosphate = alpha,alpha-trehalose 6-phosphate + GDP + H(+). The enzyme catalyses TDP-alpha-D-glucose + D-glucose 6-phosphate = 5-methyl-UDP + alpha,alpha-trehalose 6-phosphate + H(+). It carries out the reaction D-glucose 6-phosphate + UDP-alpha-D-glucose = alpha,alpha-trehalose 6-phosphate + UDP + H(+). It participates in glycan biosynthesis; trehalose biosynthesis. Functionally, probably involved in the osmoprotection via the biosynthesis of trehalose and in the production of glycogen and alpha-glucan via the TreS-Pep2 branch involved in the biosynthesis of maltose-1-phosphate (M1P). Catalyzes the transfer of glucose from UDP-glucose (UDP-Glc) to D-glucose 6-phosphate (Glc-6-P) to form trehalose-6-phosphate. Probably also able to use ADP-Glc, CDP-Glc, GDP-Glc and TDP-Glc as glucosyl donors. The chain is Trehalose-6-phosphate synthase from Mycobacterium marinum (strain ATCC BAA-535 / M).